The following is a 131-amino-acid chain: uncharacterized protein (131 aa).

This is an uncharacterized protein from Homo sapiens (Human).